Reading from the N-terminus, the 367-residue chain is DNA replication and repair protein RecF (367 aa).

ATP is bound at residue Gly30–Thr37.

Belongs to the RecF family.

It is found in the cytoplasm. The RecF protein is involved in DNA metabolism; it is required for DNA replication and normal SOS inducibility. RecF binds preferentially to single-stranded, linear DNA. It also seems to bind ATP. The polypeptide is DNA replication and repair protein RecF (Pseudomonas fluorescens (strain SBW25)).